The following is a 170-amino-acid chain: NADH-quinone oxidoreductase subunit B (170 aa).

[4Fe-4S] cluster contacts are provided by Cys42, Cys43, Cys107, and Cys136.

This sequence belongs to the complex I 20 kDa subunit family. NDH-1 is composed of 14 different subunits. Subunits NuoB, C, D, E, F, and G constitute the peripheral sector of the complex. [4Fe-4S] cluster is required as a cofactor.

Its subcellular location is the cell inner membrane. The enzyme catalyses a quinone + NADH + 5 H(+)(in) = a quinol + NAD(+) + 4 H(+)(out). Functionally, NDH-1 shuttles electrons from NADH, via FMN and iron-sulfur (Fe-S) centers, to quinones in the respiratory chain. The immediate electron acceptor for the enzyme in this species is believed to be ubiquinone. Couples the redox reaction to proton translocation (for every two electrons transferred, four hydrogen ions are translocated across the cytoplasmic membrane), and thus conserves the redox energy in a proton gradient. In Campylobacter concisus (strain 13826), this protein is NADH-quinone oxidoreductase subunit B.